We begin with the raw amino-acid sequence, 89 residues long: UPF0213 protein HQ_3675A (89 aa).

In terms of domain architecture, GIY-YIG spans 3–78 (DYHYVYIVEC…KSYTREKKQQ (76 aa)).

The protein belongs to the UPF0213 family.

This is UPF0213 protein HQ_3675A from Haloquadratum walsbyi (strain DSM 16790 / HBSQ001).